Here is a 238-residue protein sequence, read N- to C-terminus: Sugar fermentation stimulation protein homolog (238 aa).

This sequence belongs to the SfsA family.

This is Sugar fermentation stimulation protein homolog from Pseudoalteromonas translucida (strain TAC 125).